Consider the following 276-residue polypeptide: Diaminopimelate epimerase (276 aa).

Residues Asn13, Gln46, and Asn66 each coordinate substrate. Cys75 (proton donor) is an active-site residue. Residues 76-77 (GN), Asn159, Asn192, and 210-211 (ER) each bind substrate. Cys219 functions as the Proton acceptor in the catalytic mechanism. Substrate is bound at residue 220–221 (GT).

The protein belongs to the diaminopimelate epimerase family. In terms of assembly, homodimer.

It localises to the cytoplasm. The catalysed reaction is (2S,6S)-2,6-diaminopimelate = meso-2,6-diaminopimelate. It participates in amino-acid biosynthesis; L-lysine biosynthesis via DAP pathway; DL-2,6-diaminopimelate from LL-2,6-diaminopimelate: step 1/1. Functionally, catalyzes the stereoinversion of LL-2,6-diaminopimelate (L,L-DAP) to meso-diaminopimelate (meso-DAP), a precursor of L-lysine and an essential component of the bacterial peptidoglycan. The protein is Diaminopimelate epimerase of Aeromonas hydrophila subsp. hydrophila (strain ATCC 7966 / DSM 30187 / BCRC 13018 / CCUG 14551 / JCM 1027 / KCTC 2358 / NCIMB 9240 / NCTC 8049).